A 313-amino-acid polypeptide reads, in one-letter code: 2,3-dihydroxyphenylpropionate/2,3-dihydroxicinnamic acid 1,2-dioxygenase (313 aa).

The active-site Proton donor is His115. His179 functions as the Proton acceptor in the catalytic mechanism.

It belongs to the LigB/MhpB extradiol dioxygenase family. As to quaternary structure, homotetramer. Fe(2+) is required as a cofactor.

It carries out the reaction 3-(2,3-dihydroxyphenyl)propanoate + O2 = (2Z,4E)-2-hydroxy-6-oxonona-2,4-dienedioate + H(+). It catalyses the reaction (2E)-3-(2,3-dihydroxyphenyl)prop-2-enoate + O2 = (2Z,4E,7E)-2-hydroxy-6-oxonona-2,4,7-trienedioate + H(+). It functions in the pathway aromatic compound metabolism; 3-phenylpropanoate degradation. Functionally, catalyzes the non-heme iron(II)-dependent oxidative cleavage of 2,3-dihydroxyphenylpropionic acid and 2,3-dihydroxicinnamic acid into 2-hydroxy-6-ketononadienedioate and 2-hydroxy-6-ketononatrienedioate, respectively. In Mycolicibacterium smegmatis (strain ATCC 700084 / mc(2)155) (Mycobacterium smegmatis), this protein is 2,3-dihydroxyphenylpropionate/2,3-dihydroxicinnamic acid 1,2-dioxygenase.